Consider the following 314-residue polypeptide: Malate dehydrogenase (314 aa).

Residues 11–16 (GSGNIG) and Asp35 contribute to the NAD(+) site. Positions 84 and 90 each coordinate substrate. NAD(+) contacts are provided by residues Asn97 and 120–122 (ITN). Substrate is bound by residues Asn122 and Arg153. The active-site Proton acceptor is His177.

The protein belongs to the LDH/MDH superfamily. MDH type 3 family.

It carries out the reaction (S)-malate + NAD(+) = oxaloacetate + NADH + H(+). Catalyzes the reversible oxidation of malate to oxaloacetate. The polypeptide is Malate dehydrogenase (Rickettsia felis (strain ATCC VR-1525 / URRWXCal2) (Rickettsia azadi)).